The primary structure comprises 577 residues: Arginine--tRNA ligase (577 aa).

The 'HIGH' region motif lies at 122 to 132 (PNVAKEMHVGH).

This sequence belongs to the class-I aminoacyl-tRNA synthetase family. Monomer.

The protein localises to the cytoplasm. It carries out the reaction tRNA(Arg) + L-arginine + ATP = L-arginyl-tRNA(Arg) + AMP + diphosphate. The protein is Arginine--tRNA ligase of Haemophilus influenzae (strain 86-028NP).